A 411-amino-acid polypeptide reads, in one-letter code: Phosphopentomutase (411 aa).

Positions 14, 306, 311, 347, 348, and 359 each coordinate Mn(2+).

It belongs to the phosphopentomutase family. It depends on Mn(2+) as a cofactor.

It is found in the cytoplasm. It catalyses the reaction 2-deoxy-alpha-D-ribose 1-phosphate = 2-deoxy-D-ribose 5-phosphate. The catalysed reaction is alpha-D-ribose 1-phosphate = D-ribose 5-phosphate. It functions in the pathway carbohydrate degradation; 2-deoxy-D-ribose 1-phosphate degradation; D-glyceraldehyde 3-phosphate and acetaldehyde from 2-deoxy-alpha-D-ribose 1-phosphate: step 1/2. Its function is as follows. Isomerase that catalyzes the conversion of deoxy-ribose 1-phosphate (dRib-1-P) and ribose 1-phosphate (Rib-1-P) to deoxy-ribose 5-phosphate (dRib-5-P) and ribose 5-phosphate (Rib-5-P), respectively. This Lactococcus lactis subsp. cremoris (strain MG1363) protein is Phosphopentomutase.